The chain runs to 234 residues: uncharacterized protein (234 aa).

This is an uncharacterized protein from Methanocaldococcus jannaschii (strain ATCC 43067 / DSM 2661 / JAL-1 / JCM 10045 / NBRC 100440) (Methanococcus jannaschii).